A 512-amino-acid polypeptide reads, in one-letter code: tRNA-2-methylthio-N(6)-dimethylallyladenosine synthase (512 aa).

Positions 1–22 are disordered; sequence MVAHDAAAGVTGEGAGPPVRRA. The MTTase N-terminal domain occupies 25–141; that stretch reads RTYQVRTYGC…LPTLLERARH (117 aa). Residues Cys-34, Cys-70, Cys-104, Cys-178, Cys-182, and Cys-185 each coordinate [4Fe-4S] cluster. The Radical SAM core domain maps to 164–400; it reads RESAYAAWVS…IALQEQISLE (237 aa). Positions 403–471 constitute a TRAM domain; that stretch reads RALVGQAVEV…PHHLIADAGV (69 aa).

This sequence belongs to the methylthiotransferase family. MiaB subfamily. Monomer. [4Fe-4S] cluster is required as a cofactor.

The protein localises to the cytoplasm. The catalysed reaction is N(6)-dimethylallyladenosine(37) in tRNA + (sulfur carrier)-SH + AH2 + 2 S-adenosyl-L-methionine = 2-methylsulfanyl-N(6)-dimethylallyladenosine(37) in tRNA + (sulfur carrier)-H + 5'-deoxyadenosine + L-methionine + A + S-adenosyl-L-homocysteine + 2 H(+). Functionally, catalyzes the methylthiolation of N6-(dimethylallyl)adenosine (i(6)A), leading to the formation of 2-methylthio-N6-(dimethylallyl)adenosine (ms(2)i(6)A) at position 37 in tRNAs that read codons beginning with uridine. The polypeptide is tRNA-2-methylthio-N(6)-dimethylallyladenosine synthase (Mycobacterium bovis (strain ATCC BAA-935 / AF2122/97)).